The chain runs to 308 residues: Glutaminase (308 aa).

Substrate is bound by residues S66, N117, E161, N168, Y192, Y244, and V262.

It belongs to the glutaminase family. Homotetramer.

The enzyme catalyses L-glutamine + H2O = L-glutamate + NH4(+). The chain is Glutaminase from Klebsiella pneumoniae (strain 342).